The sequence spans 202 residues: Small ribosomal subunit protein uS4c (202 aa).

An S4 RNA-binding domain is found at 90–153 (MRLDNIIFRL…KSQAIISKNL (64 aa)).

The protein belongs to the universal ribosomal protein uS4 family. As to quaternary structure, part of the 30S ribosomal subunit. Contacts protein S5. The interaction surface between S4 and S5 is involved in control of translational fidelity.

The protein localises to the plastid. The protein resides in the chloroplast. One of the primary rRNA binding proteins, it binds directly to 16S rRNA where it nucleates assembly of the body of the 30S subunit. Functionally, with S5 and S12 plays an important role in translational accuracy. The chain is Small ribosomal subunit protein uS4c (rps4) from Rosulabryum capillare (Capillary thread-moss).